The chain runs to 139 residues: Ubiquitin-conjugating enzyme spm2 (139 aa).

The UBC core domain maps to Pro5 to Phe139.

Belongs to the ubiquitin-conjugating enzyme family. In terms of assembly, heterodimer with ubc13.

In terms of biological role, has a role in the DNA error-free postreplication repair (PRR) pathway. Lacks catalytic activity by itself. The ubc13/spm2 heterodimer catalyzes the synthesis of non-canonical poly-ubiquitin chains that are linked through 'Lys-63'. This chain is Ubiquitin-conjugating enzyme spm2 (spm2), found in Schizosaccharomyces pombe (strain 972 / ATCC 24843) (Fission yeast).